Here is a 301-residue protein sequence, read N- to C-terminus: Phomoidride biosynthesis cluster protein F (301 aa).

Its function is as follows. Part of the gene cluster that mediates the biosynthesis of the antihypercholesterolemic agents phomoidrides which are dimeric anhydrides. The function of phiF within the pathway has still to be determined. The pathway begins with the highly reducing polyketide synthase phiA that catalyzes the formation of a C12-fatty acyl-ACP, starting from one acetate and 5 malonate units. The hydrolase phiM is involved in the release of the C12-fatty acyl chain from phiA. The alkylcitrate synthase (ACS) phiJ and the alkylcitrate dehydratase (ACDH) phiI then give rise to decarboxylated monomeric anhydrides by coupling the C12-fatty acyl chain with oxalacetic acid. The cyclase phiC is responsible for the dimerization of the monomeric anhydrides which leads to the production of prephomoidride that contains the characteristic bicyclo[4.3.1]deca-1,6-diene system of phomoidrides. Iterative oxidation catalyzed by the alpha-ketoglutarate-dependent dioxygenase phiK produced then phomoidride A. Finally, the methyltransferase phiE converts phomoidride A to phomoidride B via an acetalization reaction. The phosphatidylethanolamine-binding protein phiB and phiN are not essential for dimerization and their functions have still to be determined. The polypeptide is Phomoidride biosynthesis cluster protein F (Fungal sp. (strain ATCC 74256)).